A 611-amino-acid polypeptide reads, in one-letter code: Probable methyltransferase PMT19 (611 aa).

At 1–15 the chain is on the cytoplasmic side; that stretch reads MNPSQQHLPKLCPKR. A helical; Signal-anchor for type II membrane protein membrane pass occupies residues 16–36; that stretch reads LFLFFTPFLLFSLYYILTTIK. The Lumenal portion of the chain corresponds to 37–611; the sequence is TITISSQDRH…TILIVDNSIK (575 aa). N-linked (GlcNAc...) asparagine glycans are attached at residues Asn-68, Asn-97, Asn-289, Asn-408, Asn-411, and Asn-587.

Belongs to the methyltransferase superfamily.

It localises to the endoplasmic reticulum membrane. This chain is Probable methyltransferase PMT19, found in Arabidopsis thaliana (Mouse-ear cress).